The sequence spans 68 residues: MKASTLVVIFIVIFITISSFSIHDVQASGVEKREQKDCLKKLKLCKENKDCCSKSCKRRGTNIEKRCR.

A signal peptide spans 1-27 (MKASTLVVIFIVIFITISSFSIHDVQA). Positions 28 to 35 (SGVEKREQ) are excised as a propeptide. 3 disulfides stabilise this stretch: C38–C52, C45–C56, and C51–C67. The tract at residues 57–59 (KRR) is essential for stimulation of [3H]ryanodine binding to RYR1.

Belongs to the scorpion calcin family. As to expression, expressed by the venom gland.

It localises to the secreted. This toxin only weakly stabilizes ryanodine receptor 1 (RyR1) opening in a long-lasting subconductance state (55% of the full conductance state obtained only at high concentrations (1 uM)). In addition, it has been shown to dose-dependently stimulate ryanodine binding to RyR1 with the lowest activity of all calcins (EC(50)=376 nM). It also augments the bell-shaped calcium-[3H]ryanodine binding curve that is maximal at about 10 uM calcium concentration. It binds a different site as ryanodine. It acts synergistically with caffeine. In contrast to other calcins, it does not trigger calcium release from sarcoplasmic vesicles even at high concentration (1 uM). In vivo, intracerebroventricular injection into mice induces neurotoxic symptoms, followed by death. The sequence is that of Urocalcin from Urodacus yaschenkoi (Inland robust scorpion).